The primary structure comprises 1501 residues: 1-phosphatidylinositol 4,5-bisphosphate phosphodiesterase eta-2 (1501 aa).

Residues 28-47 (RGFSGLQGGRRRGRGEKGIP) form a disordered region. Residues 75–229 (MPGPQPSAAS…WVTGLRYLMA (155 aa)) form a necessary for plasma membrane localization region. The PH domain occupies 121–229 (SAMQEGTQMV…WVTGLRYLMA (109 aa)). EF-hand domains lie at 243–278 (TRDQWLKQTFDEADKNGDGSLSISEVLQLLHKLNVN) and 279–315 (LPRQRVKQMFREADTDDHQGTLGFEEFCAFYKMMSTR). Positions 256, 258, 260, 262, and 267 each coordinate Ca(2+). Positions 400 to 545 (QDMTQPLSHY…LKGKILVKGK (146 aa)) constitute a PI-PLC X-box domain. Residue His415 is part of the active site. Ca(2+) is bound by residues Asn416, Glu445, and Asp447. The active site involves His459. Ca(2+) is bound at residue Glu494. Lys543 and Lys545 together coordinate substrate. Disordered stretches follow at residues 551–570 (ISEDAEEGEVSDEDSADEME) and 609–700 (DPND…QKKT). The span at 553 to 570 (EDAEEGEVSDEDSADEME) shows a compositional bias: acidic residues. A phosphoserine mark is found at Ser561 and Ser565. Residues 626–638 (RKAEAKKGQSKVE) are compositionally biased toward basic and acidic residues. Positions 662-673 (SKRKKKGSKIKK) are enriched in basic residues. A phosphoserine mark is found at Ser676 and Ser686. The PI-PLC Y-box domain maps to 707–821 (LSDLVKYTKS…GYVLKPQCMC (115 aa)). Residues Ser734 and Arg761 each contribute to the substrate site. The C2 domain maps to 821–950 (CQGVFNPNSE…PGYRHVYLEG (130 aa)). Ca(2+)-binding residues include Ile865, Asp867, Asp891, Asp920, His921, and Asp922. Disordered stretches follow at residues 986-1073 (GSLD…RLFP), 1089-1238 (EEPA…SSND), 1273-1305 (SAARPDLPPVTKSKSNPNLRVAGGLPTAPDELQ), and 1398-1469 (GDIT…GACS). Low complexity predominate over residues 1089–1107 (EEPALGPGLPLQAAAPTGP). Basic and acidic residues-rich tracts occupy residues 1142–1151 (GGRENEEPPL) and 1215–1227 (LWQRLEPGSHRDS). Low complexity predominate over residues 1421-1439 (RRSSSRSQSRVRAIASRAR). The span at 1440 to 1463 (QAQERQQRLRGQDSRGPPEEERGT) shows a compositional bias: basic and acidic residues.

The cofactor is Ca(2+). As to expression, specifically detected in the brain, with higher level in cerebral cortex, olfactory bulb and hippocampus (at protein level). Expressed in the pyramidal cells of the hippocampus, but also in eye and lung.

The protein resides in the cytoplasm. The protein localises to the cell membrane. It carries out the reaction a 1,2-diacyl-sn-glycero-3-phospho-(1D-myo-inositol-4,5-bisphosphate) + H2O = 1D-myo-inositol 1,4,5-trisphosphate + a 1,2-diacyl-sn-glycerol + H(+). Its activity is regulated as follows. Activity is stimulated by GNB1:GNG2. Functionally, the production of the second messenger molecules diacylglycerol (DAG) and inositol 1,4,5-trisphosphate (IP3) is mediated by activated phosphatidylinositol-specific phospholipase C enzymes. This phospholipase activity is very sensitive to calcium. May be important for formation and maintenance of the neuronal network in the postnatal brain. The sequence is that of 1-phosphatidylinositol 4,5-bisphosphate phosphodiesterase eta-2 from Mus musculus (Mouse).